The sequence spans 633 residues: DNA topoisomerase 4 subunit B (633 aa).

ATP is bound by residues Y5, N45, D72, 113 to 119 (GLHGVGA), and K337. One can recognise a Toprim domain in the interval 419 to 534 (KELFIVEGDS…LGHVYLALPP (116 aa)). Positions 425, 499, and 501 each coordinate Mg(2+).

This sequence belongs to the type II topoisomerase family. ParE type 2 subfamily. Heterotetramer composed of ParC and ParE. Requires Mg(2+) as cofactor. Mn(2+) serves as cofactor. It depends on Ca(2+) as a cofactor.

The enzyme catalyses ATP-dependent breakage, passage and rejoining of double-stranded DNA.. In terms of biological role, topoisomerase IV is essential for chromosome segregation. It relaxes supercoiled DNA. Performs the decatenation events required during the replication of a circular DNA molecule. The sequence is that of DNA topoisomerase 4 subunit B from Mycoplasma genitalium (strain ATCC 33530 / DSM 19775 / NCTC 10195 / G37) (Mycoplasmoides genitalium).